The following is an 859-amino-acid chain: Anoctamin-7 (859 aa).

Residues 1-297 are Cytoplasmic-facing; that stretch reads MLRGQAREED…YFAWLGFYTG (297 aa). A disordered region spans residues 25–50; that stretch reads GCSYGSTAQASEAGKQQVAPSRVGSS. The helical transmembrane segment at 298 to 318 threads the bilayer; sequence WLLPAAVVGTVVFLVGCFLVF. At 319–362 the chain is on the extracellular side; the sequence is SDIPTQELCHSSDSFDMCPLCSDCSFWLLSSACTLAQAGRLFDH. Residues 363–383 traverse the membrane as a helical segment; that stretch reads GGTVFFSLFMALWAVLLLEYW. Over 384–441 the chain is Cytoplasmic; sequence KRKNATLAYRWDCSDYEDIEERPRPQFAATAPMTALNPITGEDEPYFPEKNRVRRMLA. The chain crosses the membrane as a helical span at residues 442–462; that stretch reads GSVVLLMMVAVVIMCLVSVIL. The Extracellular portion of the chain corresponds to 463-492; that stretch reads YRAVMAIIVSRSDNAFLSAWASRIASLTGS. Residues 493–513 form a helical membrane-spanning segment; the sequence is VVNLVFILILSKVYVLLAQVL. The Cytoplasmic portion of the chain corresponds to 514 to 530; sequence TRWEMHRTQTEFEDAFT. Residues 531-551 form a helical membrane-spanning segment; sequence LKVFIFQFVNFYASPVYIAFF. Over 552-651 the chain is Extracellular; sequence KGRFVGYPGN…FHEYLEMVLQ (100 aa). The chain crosses the membrane as a helical span at residues 652-672; it reads FGFVTIFVAACPLAPLFALLN. Residues 673–700 are Cytoplasmic-facing; it reads NWVEIRLDARKFVCEYRRPVAERAQDIG. The chain crosses the membrane as a helical span at residues 701–721; it reads IWFHILTGLTHLAVISNAFLL. Topologically, residues 722-780 are extracellular; the sequence is AFSSDFLPRVYYSWTHAPDLHGFLNFTLARAPPTFTSAHNRTCRYRAFRDDDGHYSPTY. N-linked (GlcNAc...) asparagine glycans are attached at residues Asn746 and Asn761. The chain crosses the membrane as a helical span at residues 781–801; it reads WTLLAIRLAFVIVFEHVVFSI. Over 802–859 the chain is Cytoplasmic; it reads GRVLDLLVPDIPESVEIKVKREYYLAKQALAENEALLGATGVKDDQPPSSEPSLGLPA.

It belongs to the anoctamin family. Highly expressed in the stomach. Expressed at low levels in small intestine and large intestine.

The protein localises to the cell membrane. It is found in the endoplasmic reticulum. It carries out the reaction a 1,2-diacyl-sn-glycero-3-phospho-L-serine(in) = a 1,2-diacyl-sn-glycero-3-phospho-L-serine(out). It catalyses the reaction a beta-D-galactosyl-(1&lt;-&gt;1')-N-acylsphing-4-enine(out) = a beta-D-galactosyl-(1&lt;-&gt;1')-N-acylsphing-4-enine(in). The catalysed reaction is a 1,2-diacyl-sn-glycero-3-phosphocholine(in) = a 1,2-diacyl-sn-glycero-3-phosphocholine(out). In terms of biological role, has calcium-dependent phospholipid scramblase activity; scrambles phosphatidylserine, phosphatidylcholine and galactosylceramide. Does not exhibit calcium-activated chloride channel (CaCC) activity. May play a role in cell-cell interactions. This Mus musculus (Mouse) protein is Anoctamin-7 (Ano7).